A 199-amino-acid chain; its full sequence is dITP/XTP pyrophosphatase (199 aa).

Position 7–12 (7–12 (TSNRGK)) interacts with substrate. Catalysis depends on D74, which acts as the Proton acceptor. D74 serves as a coordination point for Mg(2+). Substrate-binding positions include S75, 156–159 (FGYD), K179, and 184–185 (HR).

This sequence belongs to the HAM1 NTPase family. In terms of assembly, homodimer. Mg(2+) is required as a cofactor.

It catalyses the reaction XTP + H2O = XMP + diphosphate + H(+). The enzyme catalyses dITP + H2O = dIMP + diphosphate + H(+). It carries out the reaction ITP + H2O = IMP + diphosphate + H(+). Functionally, pyrophosphatase that catalyzes the hydrolysis of nucleoside triphosphates to their monophosphate derivatives, with a high preference for the non-canonical purine nucleotides XTP (xanthosine triphosphate), dITP (deoxyinosine triphosphate) and ITP. Seems to function as a house-cleaning enzyme that removes non-canonical purine nucleotides from the nucleotide pool, thus preventing their incorporation into DNA/RNA and avoiding chromosomal lesions. The sequence is that of dITP/XTP pyrophosphatase from Sulfurimonas denitrificans (strain ATCC 33889 / DSM 1251) (Thiomicrospira denitrificans (strain ATCC 33889 / DSM 1251)).